The primary structure comprises 569 residues: Proline--tRNA ligase (569 aa).

Belongs to the class-II aminoacyl-tRNA synthetase family. ProS type 1 subfamily. As to quaternary structure, homodimer.

It localises to the cytoplasm. It catalyses the reaction tRNA(Pro) + L-proline + ATP = L-prolyl-tRNA(Pro) + AMP + diphosphate. Functionally, catalyzes the attachment of proline to tRNA(Pro) in a two-step reaction: proline is first activated by ATP to form Pro-AMP and then transferred to the acceptor end of tRNA(Pro). As ProRS can inadvertently accommodate and process non-cognate amino acids such as alanine and cysteine, to avoid such errors it has two additional distinct editing activities against alanine. One activity is designated as 'pretransfer' editing and involves the tRNA(Pro)-independent hydrolysis of activated Ala-AMP. The other activity is designated 'posttransfer' editing and involves deacylation of mischarged Ala-tRNA(Pro). The misacylated Cys-tRNA(Pro) is not edited by ProRS. The protein is Proline--tRNA ligase of Legionella pneumophila (strain Corby).